A 200-amino-acid chain; its full sequence is dITP/XTP pyrophosphatase (200 aa).

A substrate-binding site is contributed by 7–12 (TSNKHK). Residues Glu38 and Asp73 each contribute to the Mg(2+) site. Residue Asp73 is the Proton acceptor of the active site. Substrate-binding positions include Ser74, 154-157 (FGYD), Lys177, and 182-183 (HR).

This sequence belongs to the HAM1 NTPase family. As to quaternary structure, homodimer. Mg(2+) is required as a cofactor.

The catalysed reaction is XTP + H2O = XMP + diphosphate + H(+). It catalyses the reaction dITP + H2O = dIMP + diphosphate + H(+). The enzyme catalyses ITP + H2O = IMP + diphosphate + H(+). Its function is as follows. Pyrophosphatase that catalyzes the hydrolysis of nucleoside triphosphates to their monophosphate derivatives, with a high preference for the non-canonical purine nucleotides XTP (xanthosine triphosphate), dITP (deoxyinosine triphosphate) and ITP. Seems to function as a house-cleaning enzyme that removes non-canonical purine nucleotides from the nucleotide pool, thus preventing their incorporation into DNA/RNA and avoiding chromosomal lesions. This chain is dITP/XTP pyrophosphatase, found in Campylobacter jejuni subsp. jejuni serotype O:2 (strain ATCC 700819 / NCTC 11168).